A 400-amino-acid polypeptide reads, in one-letter code: Imidazolonepropionase (400 aa).

His-68 and His-70 together coordinate Fe(3+). Residues His-68 and His-70 each coordinate Zn(2+). 4-imidazolone-5-propanoate-binding residues include Arg-77, Tyr-140, and His-173. Tyr-140 lines the N-formimidoyl-L-glutamate pocket. Fe(3+) is bound at residue His-238. His-238 is a Zn(2+) binding site. Gln-241 contributes to the 4-imidazolone-5-propanoate binding site. Asp-313 contacts Fe(3+). Asp-313 contributes to the Zn(2+) binding site. N-formimidoyl-L-glutamate-binding residues include Asn-315 and Gly-317. Thr-318 lines the 4-imidazolone-5-propanoate pocket.

Belongs to the metallo-dependent hydrolases superfamily. HutI family. It depends on Zn(2+) as a cofactor. Fe(3+) is required as a cofactor.

The protein resides in the cytoplasm. The catalysed reaction is 4-imidazolone-5-propanoate + H2O = N-formimidoyl-L-glutamate. It functions in the pathway amino-acid degradation; L-histidine degradation into L-glutamate; N-formimidoyl-L-glutamate from L-histidine: step 3/3. Catalyzes the hydrolytic cleavage of the carbon-nitrogen bond in imidazolone-5-propanoate to yield N-formimidoyl-L-glutamate. It is the third step in the universal histidine degradation pathway. The protein is Imidazolonepropionase of Paracoccus denitrificans (strain Pd 1222).